The primary structure comprises 380 residues: Protein Wnt-5a (380 aa).

Residues 1–35 (MKKSIGILSPGVALGTAGSAMSSKFFVMALAVFFS) form the signal peptide. Positions 36–61 (FAQVVIEANSWWSLGMNNPVQMSEVY) are excised as a propeptide. A disulfide bridge connects residues Cys-104 and Cys-115. Asn-114 and Asn-120 each carry an N-linked (GlcNAc...) asparagine glycan. Intrachain disulfides connect Cys-154–Cys-162, Cys-164–Cys-182, Cys-238–Cys-252, Cys-240–Cys-247, Cys-309–Cys-340, Cys-325–Cys-335, Cys-339–Cys-379, Cys-355–Cys-370, Cys-357–Cys-367, and Cys-362–Cys-363. A lipid anchor (O-palmitoleoyl serine; by PORCN) is attached at Ser-244. N-linked (GlcNAc...) asparagine glycosylation is found at Asn-312 and Asn-326.

This sequence belongs to the Wnt family. Forms a soluble 1:1 complex with AFM; this prevents oligomerization and is required for prolonged biological activity. The complex with AFM may represent the physiological form in body fluids. Homooligomer; disulfide-linked, leading to inactivation (in vitro). Interacts with PORCN. Interacts with WLS. Interacts with glypican GCP3. Interacts with PKD1 (via extracellular domain). Interacts with TMEM67. Glycosylation is necessary for secretion but not for activity. In terms of processing, palmitoleoylation is required for efficient binding to frizzled receptors. Depalmitoleoylation leads to Wnt signaling pathway inhibition. Post-translationally, proteolytic processing by TIKI1 and TIKI2 promotes oxidation and formation of large disulfide-bond oligomers, leading to inactivation of WNT5A.

Its subcellular location is the secreted. The protein localises to the extracellular space. The protein resides in the extracellular matrix. Functionally, ligand for members of the frizzled family of seven transmembrane receptors. Can activate or inhibit canonical Wnt signaling, depending on receptor context. In the presence of FZD4, activates beta-catenin signaling. In the presence of ROR2, inhibits the canonical Wnt pathway by promoting beta-catenin degradation through a GSK3-independent pathway which involves down-regulation of beta-catenin-induced reporter gene expression. Suppression of the canonical pathway allows chondrogenesis to occur. Inhibits tumor formation. Stimulates cell migration. Decreases proliferation, migration, invasiveness and clonogenicity of carcinoma cells and may act as a tumor suppressor. Mediates motility of melanoma cells. Required during embryogenesis for extension of the primary anterior-posterior axis and for outgrowth of limbs and the genital tubercle. Inhibits type II collagen expression in chondrocytes. The polypeptide is Protein Wnt-5a (Oryctolagus cuniculus (Rabbit)).